The sequence spans 591 residues: Solute carrier family 40 member 2, chloroplastic (591 aa).

A chloroplast-targeting transit peptide spans 1 to 66 (MGMVTATAAA…RCYITNVEVD (66 aa)). 11 helical membrane passes run 159–179 (WPAA…VGFF), 206–226 (GLNA…IYAM), 242–262 (WFIA…ALGV), 293–313 (LVCE…YHPV), 318–338 (IACG…QLIN), 391–411 (VATV…MTAL), 419–439 (PSIV…ATFI), 452–472 (AGAA…VVYW), 482–502 (LLIF…YDVV), 518–540 (LIGG…MAII), and 547–569 (FGFL…CQWL).

This sequence belongs to the ferroportin (FP) (TC 2.A.100) family. SLC40A subfamily.

The protein resides in the membrane. It is found in the plastid. Its subcellular location is the chloroplast envelope. May be involved in iron transport and iron homeostasis. The protein is Solute carrier family 40 member 2, chloroplastic of Oryza sativa subsp. japonica (Rice).